A 190-amino-acid polypeptide reads, in one-letter code: Imidazoleglycerol-phosphate dehydratase (190 aa).

This sequence belongs to the imidazoleglycerol-phosphate dehydratase family.

The protein localises to the cytoplasm. The catalysed reaction is D-erythro-1-(imidazol-4-yl)glycerol 3-phosphate = 3-(imidazol-4-yl)-2-oxopropyl phosphate + H2O. It participates in amino-acid biosynthesis; L-histidine biosynthesis; L-histidine from 5-phospho-alpha-D-ribose 1-diphosphate: step 6/9. The protein is Imidazoleglycerol-phosphate dehydratase of Sulfurovum sp. (strain NBC37-1).